The following is a 214-amino-acid chain: Cytochrome b (214 aa).

4 helical membrane-spanning segments follow: residues 31-51 (FGSM…FLAI), 75-96 (WIMQ…YIHI), 111-131 (WLSG…GYVL), and 176-196 (FFAL…IHIL). Heme b-binding residues include histidine 81 and histidine 95. Residues histidine 180 and histidine 194 each coordinate heme b. Histidine 199 serves as a coordination point for a ubiquinone.

The protein belongs to the cytochrome b family. As to quaternary structure, the cytochrome bc1 complex contains 3 respiratory subunits (MT-CYB, CYC1 and UQCRFS1), 2 core proteins (UQCRC1 and UQCRC2) and probably 6 low-molecular weight proteins. The cofactor is heme b.

It localises to the mitochondrion inner membrane. In terms of biological role, component of the ubiquinol-cytochrome c reductase complex (complex III or cytochrome b-c1 complex) that is part of the mitochondrial respiratory chain. The b-c1 complex mediates electron transfer from ubiquinol to cytochrome c. Contributes to the generation of a proton gradient across the mitochondrial membrane that is then used for ATP synthesis. The protein is Cytochrome b (MT-CYB) of Trimeresurus stejnegeri (Chinese green tree viper).